Reading from the N-terminus, the 551-residue chain is Putative hydroxymethylpyrimidine/phosphomethylpyrimidine kinase 2 (551 aa).

E76 serves as a coordination point for 4-amino-5-hydroxymethyl-2-methylpyrimidine.

In the N-terminal section; belongs to the ThiD family. The protein in the C-terminal section; belongs to the thiaminase-2 family.

The protein resides in the cytoplasm. The catalysed reaction is 4-amino-5-hydroxymethyl-2-methylpyrimidine + ATP = 4-amino-2-methyl-5-(phosphooxymethyl)pyrimidine + ADP + H(+). It carries out the reaction 4-amino-2-methyl-5-(phosphooxymethyl)pyrimidine + ATP = 4-amino-2-methyl-5-(diphosphooxymethyl)pyrimidine + ADP. The protein operates within cofactor biosynthesis; thiamine diphosphate biosynthesis; 4-amino-2-methyl-5-diphosphomethylpyrimidine from 5-amino-1-(5-phospho-D-ribosyl)imidazole: step 2/3. Its pathway is cofactor biosynthesis; thiamine diphosphate biosynthesis; 4-amino-2-methyl-5-diphosphomethylpyrimidine from 5-amino-1-(5-phospho-D-ribosyl)imidazole: step 3/3. Functionally, catalyzes the phosphorylation of hydroxymethylpyrimidine phosphate (HMP-P) to HMP-PP, and of HMP to HMP-P. This Schizosaccharomyces pombe (strain 972 / ATCC 24843) (Fission yeast) protein is Putative hydroxymethylpyrimidine/phosphomethylpyrimidine kinase 2.